The sequence spans 413 residues: Gamma-glutamyl phosphate reductase (413 aa).

This sequence belongs to the gamma-glutamyl phosphate reductase family.

Its subcellular location is the cytoplasm. It carries out the reaction L-glutamate 5-semialdehyde + phosphate + NADP(+) = L-glutamyl 5-phosphate + NADPH + H(+). The protein operates within amino-acid biosynthesis; L-proline biosynthesis; L-glutamate 5-semialdehyde from L-glutamate: step 2/2. In terms of biological role, catalyzes the NADPH-dependent reduction of L-glutamate 5-phosphate into L-glutamate 5-semialdehyde and phosphate. The product spontaneously undergoes cyclization to form 1-pyrroline-5-carboxylate. In Rhodococcus jostii (strain RHA1), this protein is Gamma-glutamyl phosphate reductase.